The following is a 528-amino-acid chain: MDTRVDTDNAMPARFSAQIQNEDEVTSDQGNNGGPNGGGRLAPRPVFRPPVDPASRQAFGRPSGVQGSFVAERVRPQKYQDQSDFTPNDQLADPVLQEAFGRPFAGAESLQRHPIDAGALAAEKDGAGPDEPDDPWRDPAAAAALGTPALAAPAPHGALAGSGKLGVRDVLFGGKVSYLALGILVAIALVIGGIGGVIGRKTAEVVDAFTTSKVTLSTTGNAQEPAGRFTKVAAAVADSVVTIESVSDQEGMQGSGVIVDGRGYIVTNNHVISEAANNPSQFKTTVVFNDGKEVPANLVGRDPKTDLAVLKVDNVDNLTVARLGDSSKVRVGDEVLAVGAPLGLRSTVTQGIVSALHRPVPLSGEGSDTDTVIDAIQTDASINHGNSGGPLIDMDAQVIGINTAGKSLSDSASGLGFAIPVNEMKLVANSLIKDGKIVHPTLGISTRSVSNAIASGAQVANVKAGSPAQKGGILENDVIVKVGNRAVADSDEFVVAVRQLAIGQDAPIEVVREGRHVTLTVKPDPDST.

A disordered region spans residues 1-70 (MDTRVDTDNA…RPSGVQGSFV (70 aa)). Residues 1–178 (MDTRVDTDNA…DVLFGGKVSY (178 aa)) lie on the Cytoplasmic side of the membrane. The segment covering 31-40 (NNGGPNGGGR) has biased composition (gly residues). A helical membrane pass occupies residues 179 to 199 (LALGILVAIALVIGGIGGVIG). The Periplasmic portion of the chain corresponds to 200-528 (RKTAEVVDAF…LTVKPDPDST (329 aa)). Catalysis depends on charge relay system residues H270, D306, and S387. Residues 426 to 487 (LVANSLIKDG…VIVKVGNRAV (62 aa)) enclose the PDZ domain.

It belongs to the peptidase S1C family. The C-terminal region exhibits both monomeric and trimeric forms in solution.

The protein localises to the cell inner membrane. It catalyses the reaction Acts on substrates that are at least partially unfolded. The cleavage site P1 residue is normally between a pair of hydrophobic residues, such as Val-|-Val.. In terms of biological role, essential protein that may act as a regulatory protease that is conditionally activated upon appropriate environmental triggers. This Mycobacterium tuberculosis (strain ATCC 25618 / H37Rv) protein is Probable serine protease HtrA1.